The chain runs to 859 residues: Leucine--tRNA ligase (859 aa).

The 'HIGH' region motif lies at 42–52 (PYPSGKLHMGH). A 'KMSKS' region motif is present at residues 618-622 (KMSKS). Lys621 serves as a coordination point for ATP.

Belongs to the class-I aminoacyl-tRNA synthetase family.

It localises to the cytoplasm. The enzyme catalyses tRNA(Leu) + L-leucine + ATP = L-leucyl-tRNA(Leu) + AMP + diphosphate. This Buchnera aphidicola subsp. Acyrthosiphon pisum (strain APS) (Acyrthosiphon pisum symbiotic bacterium) protein is Leucine--tRNA ligase.